Reading from the N-terminus, the 188-residue chain is Protease-associated domain-containing protein 1 (188 aa).

Residues 1 to 21 form the signal peptide; the sequence is MSRGAAGWCCLVLWLPTCVAA. Residues 83–163 enclose the PA domain; it reads IQDQIALVER…RSLEQHGLPW (81 aa). N-linked (GlcNAc...) asparagine glycans are attached at residues N121 and N171.

In terms of processing, N-glycosylated; required for efficient secretion. Expressed in metabolically active tissues such as liver, muscle, adipose, and heart and different brain regions like cortex and hypothalamus, expression is acutely regulated by the nutritional state.

It localises to the secreted. Functionally, plays a role in the modulation of physical activity and adiposity. The polypeptide is Protease-associated domain-containing protein 1 (Mus musculus (Mouse)).